Consider the following 460-residue polypeptide: GTPase Der (460 aa).

EngA-type G domains lie at 2-164 (QSII…HEEF) and 196-368 (IRVG…ENFT). GTP contacts are provided by residues 8 to 15 (GKPNVGKS), 55 to 59 (DSGGL), 116 to 119 (NKVD), 202 to 209 (GRVNVGKS), 249 to 253 (DTAGI), and 313 to 316 (NKWD). In terms of domain architecture, KH-like spans 369 to 453 (QKIQTSKLNT…PLVIASRKKG (85 aa)).

This sequence belongs to the TRAFAC class TrmE-Era-EngA-EngB-Septin-like GTPase superfamily. EngA (Der) GTPase family. Associates with the 50S ribosomal subunit.

In terms of biological role, GTPase that plays an essential role in the late steps of ribosome biogenesis. The protein is GTPase Der of Campylobacter jejuni subsp. jejuni serotype O:2 (strain ATCC 700819 / NCTC 11168).